The chain runs to 63 residues: Large ribosomal subunit protein bL35 (63 aa).

This sequence belongs to the bacterial ribosomal protein bL35 family.

The protein is Large ribosomal subunit protein bL35 of Campylobacter hominis (strain ATCC BAA-381 / DSM 21671 / CCUG 45161 / LMG 19568 / NCTC 13146 / CH001A).